The following is a 130-amino-acid chain: Iron-sulfur cluster assembly 1 homolog, mitochondrial (130 aa).

Residues 1 to 24 (MATRVVATATVRAVKGRKLIPTRA) constitute a mitochondrion transit peptide. 3 residues coordinate Fe cation: Cys-58, Cys-122, and Cys-124.

It belongs to the HesB/IscA family. In terms of assembly, interacts with cry. Detected in head.

The protein resides in the mitochondrion. Functionally, involved in the assembly of mitochondrial iron-sulfur proteins. Probably involved in the binding of an intermediate of Fe/S cluster assembly. Required for maintenance of circadian rhythms under constant darkness. The chain is Iron-sulfur cluster assembly 1 homolog, mitochondrial from Drosophila melanogaster (Fruit fly).